Reading from the N-terminus, the 347-residue chain is S-adenosylmethionine:tRNA ribosyltransferase-isomerase (347 aa).

This sequence belongs to the QueA family. Monomer.

The protein resides in the cytoplasm. It catalyses the reaction 7-aminomethyl-7-carbaguanosine(34) in tRNA + S-adenosyl-L-methionine = epoxyqueuosine(34) in tRNA + adenine + L-methionine + 2 H(+). It participates in tRNA modification; tRNA-queuosine biosynthesis. Transfers and isomerizes the ribose moiety from AdoMet to the 7-aminomethyl group of 7-deazaguanine (preQ1-tRNA) to give epoxyqueuosine (oQ-tRNA). The chain is S-adenosylmethionine:tRNA ribosyltransferase-isomerase from Ectopseudomonas mendocina (strain ymp) (Pseudomonas mendocina).